Consider the following 89-residue polypeptide: Small ribosomal subunit protein bS20 (89 aa).

The disordered stretch occupies residues 1 to 28 (MTLANIKSAKKRAVQSEKRRQHNASQRS).

It belongs to the bacterial ribosomal protein bS20 family.

Binds directly to 16S ribosomal RNA. This Haemophilus ducreyi (strain 35000HP / ATCC 700724) protein is Small ribosomal subunit protein bS20.